The chain runs to 128 residues: Infection structure-specific protein 56 (128 aa).

Polar residues-rich tracts occupy residues 27 to 36 (HATYPQSQPH) and 87 to 101 (TSIS…DSQS). 2 disordered regions span residues 27-48 (HATY…AVPS) and 86-128 (GTSI…STSA). The span at 115–128 (KDAKKELKDPSTSA) shows a compositional bias: basic and acidic residues.

General role in the development of germlings including formation of the infection structures. In Uromyces appendiculatus (Rust fungus), this protein is Infection structure-specific protein 56 (INF56).